Consider the following 460-residue polypeptide: UDP-N-acetylmuramoylalanine--D-glutamate ligase (460 aa).

Position 120 to 126 (120 to 126 (GSNGKTT)) interacts with ATP.

Belongs to the MurCDEF family.

Its subcellular location is the cytoplasm. The catalysed reaction is UDP-N-acetyl-alpha-D-muramoyl-L-alanine + D-glutamate + ATP = UDP-N-acetyl-alpha-D-muramoyl-L-alanyl-D-glutamate + ADP + phosphate + H(+). It participates in cell wall biogenesis; peptidoglycan biosynthesis. Functionally, cell wall formation. Catalyzes the addition of glutamate to the nucleotide precursor UDP-N-acetylmuramoyl-L-alanine (UMA). This Lactobacillus gasseri (strain ATCC 33323 / DSM 20243 / BCRC 14619 / CIP 102991 / JCM 1131 / KCTC 3163 / NCIMB 11718 / NCTC 13722 / AM63) protein is UDP-N-acetylmuramoylalanine--D-glutamate ligase.